The following is a 179-amino-acid chain: UPF0227 protein Shewana3_2292 (179 aa).

The protein belongs to the UPF0227 family.

This Shewanella sp. (strain ANA-3) protein is UPF0227 protein Shewana3_2292.